The sequence spans 183 residues: Large ribosomal subunit protein bL32m (183 aa).

The N-terminal 71 residues, 1 to 71, are a transit peptide targeting the mitochondrion; it reads MNSLIFGKQL…DFFSNNGILL (71 aa). The Zn(2+) site is built by Cys-104, Cys-107, Cys-117, and Cys-120.

This sequence belongs to the bacterial ribosomal protein bL32 family. As to quaternary structure, component of the mitochondrial large ribosomal subunit (mt-LSU). Mature yeast 74S mitochondrial ribosomes consist of a small (37S) and a large (54S) subunit. The 37S small subunit contains a 15S ribosomal RNA (15S mt-rRNA) and 34 different proteins. The 54S large subunit contains a 21S rRNA (21S mt-rRNA) and 46 different proteins. bL32m has a zinc binding site. In terms of processing, MRPL32 precursor is processed by the m-AAA protease (composed of YTA12/RCA1 and YTA10/AFG3), which cleaves the N-terminal transit peptide. Cleavage by the m-AAA protease takes place prior to assembly into the large subunit, an essential step for mitochondrial ribosome (mitoribosome) assembly. Proper processing by the m-AAA protease is dependent on the zinc-binding region within the tightly folded C-terminal domain of MRPL32: zinc-dependent folding halts degradation initiated from the N-terminus and triggers the release of mature MRPL32.

The protein resides in the mitochondrion. In terms of biological role, component of the mitochondrial ribosome (mitoribosome), a dedicated translation machinery responsible for the synthesis of mitochondrial genome-encoded proteins, including at least some of the essential transmembrane subunits of the mitochondrial respiratory chain. The mitoribosomes are attached to the mitochondrial inner membrane and translation products are cotranslationally integrated into the membrane. The chain is Large ribosomal subunit protein bL32m from Saccharomyces cerevisiae (strain ATCC 204508 / S288c) (Baker's yeast).